The primary structure comprises 579 residues: V-type ATP synthase alpha chain (579 aa).

Residue 227–234 (GGFGTGKT) participates in ATP binding.

The protein belongs to the ATPase alpha/beta chains family.

The enzyme catalyses ATP + H2O + 4 H(+)(in) = ADP + phosphate + 5 H(+)(out). Functionally, produces ATP from ADP in the presence of a proton gradient across the membrane. The V-type alpha chain is a catalytic subunit. In Anaeromyxobacter sp. (strain K), this protein is V-type ATP synthase alpha chain.